The following is a 350-amino-acid chain: Guanine nucleotide-binding protein G(t) subunit alpha (350 aa).

The interval 1–21 (MGAGASAEEKHSRELEKKLKE) is disordered. Residue glycine 2 is the site of N-myristoyl glycine attachment. The segment covering 7-21 (AEEKHSRELEKKLKE) has biased composition (basic and acidic residues). In terms of domain architecture, G-alpha spans 28–350 (RTVKLLLLGA…KENLKDCGLF (323 aa)). The tract at residues 31 to 44 (KLLLLGAGESGKST) is G1 motif. GTP-binding positions include 36–43 (GAGESGKS), 171–177 (LRSRVKT), 196–200 (DVGGQ), 265–268 (NKKD), and alanine 322. Serine 43 and threonine 177 together coordinate Mg(2+). Residues 169–177 (DVLRSRVKT) form a G2 motif region. The segment at 192–201 (FRMFDVGGQR) is G3 motif. Residues 261–268 (VLFLNKKD) are G4 motif. The segment at 320–325 (TCATDT) is G5 motif.

It belongs to the G-alpha family. G(i/o/t/z) subfamily. As to quaternary structure, g proteins are composed of 3 units; alpha, beta and gamma. The alpha chain contains the guanine nucleotide binding site.

Functionally, guanine nucleotide-binding proteins (G proteins) are involved as modulators or transducers in various transmembrane signaling systems. Transducin is an amplifier and one of the transducers of a visual impulse that performs the coupling between rhodopsin and cGMP-phosphodiesterase. In Xenopus laevis (African clawed frog), this protein is Guanine nucleotide-binding protein G(t) subunit alpha (gnat).